Consider the following 200-residue polypeptide: Ubiquitin-conjugating enzyme E2 K (200 aa).

Position 2 is an N-acetylalanine (alanine 2). Positions 4–154 constitute a UBC core domain; sequence IAVQRIKREF…ARLWAHVYAG (151 aa). Lysine 14 bears the N6-acetyllysine; alternate mark. A Glycyl lysine isopeptide (Lys-Gly) (interchain with G-Cter in SUMO); alternate cross-link involves residue lysine 14. Residue lysine 14 forms a Glycyl lysine isopeptide (Lys-Gly) (interchain with G-Cter in SUMO1); alternate linkage. Cysteine 92 (glycyl thioester intermediate) is an active-site residue. Phosphoserine is present on serine 159. A UBA domain is found at 160 to 200; that stretch reads PEYTKKIENLCAMGFDRNAVIVALSSKSWDVETATELLLSN.

Belongs to the ubiquitin-conjugating enzyme family. As to quaternary structure, interacts with RNF138/NARF. Interacts with BRCA1. Post-translationally, sumoylation at Lys-14 impairs catalytic activity.

It localises to the cytoplasm. The catalysed reaction is S-ubiquitinyl-[E1 ubiquitin-activating enzyme]-L-cysteine + [E2 ubiquitin-conjugating enzyme]-L-cysteine = [E1 ubiquitin-activating enzyme]-L-cysteine + S-ubiquitinyl-[E2 ubiquitin-conjugating enzyme]-L-cysteine.. Its pathway is protein modification; protein ubiquitination. Accepts ubiquitin from the E1 complex and catalyzes its covalent attachment to other proteins. In vitro, in the presence or in the absence of BRCA1-BARD1 E3 ubiquitin-protein ligase complex, catalyzes the synthesis of 'Lys-48'-linked polyubiquitin chains. Does not transfer ubiquitin directly to but elongates monoubiquitinated substrate protein. Mediates the selective degradation of short-lived and abnormal proteins, such as the endoplasmic reticulum-associated degradation (ERAD) of misfolded lumenal proteins. Ubiquitinates huntingtin. May mediate foam cell formation by the suppression of apoptosis of lipid-bearing macrophages through ubiquitination and subsequence degradation of p53/TP53. Proposed to be involved in ubiquitination and proteolytic processing of NF-kappa-B; in vitro supports ubiquitination of NFKB1. The protein is Ubiquitin-conjugating enzyme E2 K (UBE2K) of Bos taurus (Bovine).